A 628-amino-acid chain; its full sequence is MQANINWLDNPEVFRVNQLPAHSDHPFFRDYREWQKQHSSYQQSLNGKWKFHFSANPMDRPQDFYQRDFDSSNFDSIPVPSEIELSNYTQNQYINVLFPWEGKIFRRPAYALDPNDHEEGSFSKGADNTVGSYLKRFDLSSALIGKDVHIKFEGVEQAMYVWLNGHFVGYAEDSFTPSEFDLTPYIQDKDNLLAVEVFKHSTASWLEDQDMFRFSGIFRSVELLGIPATHLMDMDLKPRVADNYQDGIFNLKLHFIGKKAGSFHLLVKDIKGHTLLEKNEDIKENVQINNEKFENVHLWNNHDPYLYQLLIEVYDEQQNLLELIPFQFGFRRIEISPEKVVLLNGKRLIINGVNRHEWDAKRGRSITMSDMTTDINTFKENNINAVRTCHYPNQIPWYYLCDQNGIYVMAENNLESHGTWQKMGEIEPSDNVPGSIPQWKEAVIDRARINYETFKNHTSILFWSLGNESYAGDNIIAMNEFYKSHDDTRLVHYEGVVHRPELKDKISDVESCMYLPPKKVEEYLQNDPPKPFMECEYMHDMGNSDGGMGSYIKLLDKYPQYFGGFIWDFIDQALLVHDEISGHDVLRYGGDFDDRHSDYEFSGDGLMFADRTPKPAMQEVRYYYGLHK.

Residue E468 is the Proton donor of the active site. E536 serves as the catalytic Nucleophile.

The protein belongs to the glycosyl hydrolase 2 family. In terms of assembly, heterodimer of a large (LacL) and a small subunit (LacM).

The catalysed reaction is Hydrolysis of terminal non-reducing beta-D-galactose residues in beta-D-galactosides.. In terms of biological role, component of a beta-galactosidase. This chain is Beta-galactosidase large subunit, found in Lactobacillus helveticus (Lactobacillus suntoryeus).